The chain runs to 186 residues: Elongation factor P (186 aa).

It belongs to the elongation factor P family.

It is found in the cytoplasm. It functions in the pathway protein biosynthesis; polypeptide chain elongation. Functionally, involved in peptide bond synthesis. Stimulates efficient translation and peptide-bond synthesis on native or reconstituted 70S ribosomes in vitro. Probably functions indirectly by altering the affinity of the ribosome for aminoacyl-tRNA, thus increasing their reactivity as acceptors for peptidyl transferase. The sequence is that of Elongation factor P from Polynucleobacter necessarius subsp. necessarius (strain STIR1).